The following is a 113-amino-acid chain: Protein translation factor SUI1 homolog (113 aa).

The protein belongs to the SUI1 family.

Probably involved in translation. The protein is Protein translation factor SUI1 homolog of Spuriopimpinella brachycarpa (Chamnamul).